The primary structure comprises 186 residues: Protein GrpE (186 aa).

The segment covering Met-1–Gln-15 has biased composition (polar residues). A disordered region spans residues Met-1–Ala-20.

The protein belongs to the GrpE family. Homodimer.

It localises to the cytoplasm. Functionally, participates actively in the response to hyperosmotic and heat shock by preventing the aggregation of stress-denatured proteins, in association with DnaK and GrpE. It is the nucleotide exchange factor for DnaK and may function as a thermosensor. Unfolded proteins bind initially to DnaJ; upon interaction with the DnaJ-bound protein, DnaK hydrolyzes its bound ATP, resulting in the formation of a stable complex. GrpE releases ADP from DnaK; ATP binding to DnaK triggers the release of the substrate protein, thus completing the reaction cycle. Several rounds of ATP-dependent interactions between DnaJ, DnaK and GrpE are required for fully efficient folding. The polypeptide is Protein GrpE (Pseudomonas aeruginosa (strain UCBPP-PA14)).